Here is a 225-residue protein sequence, read N- to C-terminus: Octanoyltransferase (225 aa).

Residues 31 to 214 enclose the BPL/LPL catalytic domain; it reads ENTCDEVWLV…ELTTLLDYTD (184 aa). Substrate-binding positions include 70-77, 137-139, and 150-152; these read RGGQVTYH, SLG, and GLA. The active-site Acyl-thioester intermediate is the Cys168.

This sequence belongs to the LipB family.

It is found in the cytoplasm. It carries out the reaction octanoyl-[ACP] + L-lysyl-[protein] = N(6)-octanoyl-L-lysyl-[protein] + holo-[ACP] + H(+). It participates in protein modification; protein lipoylation via endogenous pathway; protein N(6)-(lipoyl)lysine from octanoyl-[acyl-carrier-protein]: step 1/2. In terms of biological role, catalyzes the transfer of endogenously produced octanoic acid from octanoyl-acyl-carrier-protein onto the lipoyl domains of lipoate-dependent enzymes. Lipoyl-ACP can also act as a substrate although octanoyl-ACP is likely to be the physiological substrate. This chain is Octanoyltransferase, found in Aliivibrio fischeri (strain ATCC 700601 / ES114) (Vibrio fischeri).